The primary structure comprises 71 residues: Keratin-associated protein 6-1 (71 aa).

Belongs to the KRTAP type 6 family. Interacts with hair keratins.

Its function is as follows. In the hair cortex, hair keratin intermediate filaments are embedded in an interfilamentous matrix, consisting of hair keratin-associated proteins (KRTAP), which are essential for the formation of a rigid and resistant hair shaft through their extensive disulfide bond cross-linking with abundant cysteine residues of hair keratins. The matrix proteins include the high-sulfur and high-glycine-tyrosine keratins. This chain is Keratin-associated protein 6-1 (KRTAP6-1), found in Homo sapiens (Human).